A 380-amino-acid polypeptide reads, in one-letter code: E3 ubiquitin-protein ligase RNF13 (380 aa).

The N-terminal stretch at 1 to 34 (MLLSIGMLMLSATQVYTILTVQLFAFLNLLPVEA) is a signal peptide. The Lumenal segment spans residues 35–182 (DILAYNFENA…VPEFSLPLEY (148 aa)). Residues 65–160 (KGFLINSKPE…GESSANSLKD (96 aa)) enclose the PA domain. The N-linked (GlcNAc...) asparagine glycan is linked to asparagine 88. The chain crosses the membrane as a helical span at residues 183-203 (YLIPFLIIVGICLILIVIFMI). Residues 204 to 380 (TKFVQDRHRA…ERDYNIANTV (177 aa)) lie on the Cytoplasmic side of the membrane. An RING-type; atypical zinc finger spans residues 240-282 (CAICLDEYEDGDKLRILPCSHAYHCKCVDPWLTKTKKTCPVCK). A disordered region spans residues 285 to 380 (VVPSQGDSDS…ERDYNIANTV (96 aa)). 2 stretches are compositionally biased toward acidic residues: residues 292–304 (SDSD…EENE) and 339–356 (SDYE…AENE).

As to quaternary structure, interacts with ERN1. In terms of processing, autoubiquitinated.

The protein localises to the endoplasmic reticulum membrane. It is found in the late endosome membrane. The protein resides in the lysosome membrane. Its subcellular location is the nucleus inner membrane. It carries out the reaction S-ubiquitinyl-[E2 ubiquitin-conjugating enzyme]-L-cysteine + [acceptor protein]-L-lysine = [E2 ubiquitin-conjugating enzyme]-L-cysteine + N(6)-ubiquitinyl-[acceptor protein]-L-lysine.. Its pathway is protein modification; protein ubiquitination. In terms of biological role, E3 ubiquitin-protein ligase that regulates cell proliferation. Involved in apoptosis regulation. Mediates ER stress-induced activation of JNK signaling pathway and apoptosis by promoting ERN1 activation and splicing of XBP1 mRNA. Also involved in protein trafficking and localization. The sequence is that of E3 ubiquitin-protein ligase RNF13 (RNF13) from Bos taurus (Bovine).